Consider the following 441-residue polypeptide: Tol-Pal system protein TolB (441 aa).

An N-terminal signal peptide occupies residues 1-39; sequence MPAMTPAFRRADLTGFLRTYGAALILLLAAMLAWQPAQA.

The protein belongs to the TolB family. In terms of assembly, the Tol-Pal system is composed of five core proteins: the inner membrane proteins TolA, TolQ and TolR, the periplasmic protein TolB and the outer membrane protein Pal. They form a network linking the inner and outer membranes and the peptidoglycan layer.

The protein localises to the periplasm. Functionally, part of the Tol-Pal system, which plays a role in outer membrane invagination during cell division and is important for maintaining outer membrane integrity. This is Tol-Pal system protein TolB from Bordetella parapertussis (strain 12822 / ATCC BAA-587 / NCTC 13253).